Reading from the N-terminus, the 533-residue chain is GMP synthase [glutamine-hydrolyzing] (533 aa).

One can recognise a Glutamine amidotransferase type-1 domain in the interval 22-215 (RILILDFGSQ…THNVAGCSGT (194 aa)). Cys99 functions as the Nucleophile in the catalytic mechanism. Active-site residues include His189 and Glu191. The GMPS ATP-PPase domain maps to 216–408 (WTMAGFRELE…LGIPESIVGR (193 aa)). 243-249 (SGGVDSS) contributes to the ATP binding site.

In terms of assembly, homodimer.

The enzyme catalyses XMP + L-glutamine + ATP + H2O = GMP + L-glutamate + AMP + diphosphate + 2 H(+). Its pathway is purine metabolism; GMP biosynthesis; GMP from XMP (L-Gln route): step 1/1. In terms of biological role, catalyzes the synthesis of GMP from XMP. The sequence is that of GMP synthase [glutamine-hydrolyzing] from Gluconobacter oxydans (strain 621H) (Gluconobacter suboxydans).